The following is a 589-amino-acid chain: Phenylalanine--tRNA ligase beta subunit (589 aa).

Residues 290–368 (LNPTCFKADI…IAYGYDNLKH (79 aa)) form the B5 domain. Residues aspartate 346, aspartate 352, glutamate 355, and aspartate 356 each coordinate Mg(2+).

The protein belongs to the phenylalanyl-tRNA synthetase beta subunit family. Type 2 subfamily. Tetramer of two alpha and two beta subunits. Mg(2+) is required as a cofactor.

The protein resides in the cytoplasm. Its subcellular location is the nucleus. It carries out the reaction tRNA(Phe) + L-phenylalanine + ATP = L-phenylalanyl-tRNA(Phe) + AMP + diphosphate + H(+). The chain is Phenylalanine--tRNA ligase beta subunit (frs1) from Schizosaccharomyces pombe (strain 972 / ATCC 24843) (Fission yeast).